The primary structure comprises 490 residues: MADSEFEEFHRPIFEPHTIAGFGSGAGSKKNNPHAFYSLIPNDDLEDSHSSKSDGDGSDQEDGIGLVDHEPKMRQVEDDELGDGLKVTLSSDGSLDTNDSFNSHRHHPLNHQDAIGGFLGMDTSGLGGNSAPVTIGASTDLLAPNTAATRRRRKLPEIPKNKKSSILHLLGGSNFGSLADEFRNGGGGGIPPAVRSGQQRSFLSLKCGYLMDEDSSPDSERMQSLGDVDSGHSTAHSPNDFKSMSPQITSPVSQSPFPPPFGGVPFGQLEMLEATHRGLHKFVPRHHDEIELEIGDAIYVQKEAEDLWCEGVNLRTGRQGIFPSAYAVDLDYNEFDPTVQLVKKERYLLGYLGSVETLAHKGTGVVCQAVRKIVGEYGNSPTGQTCILEVSDQGLRMVDRSGPNQNKKDKKPCIDYFYSLKNVSFCAFHPRDHRFIGFITKHPTVQRFACHVFKGSESTRPVAEAVGRAFQRFYQKFIETAYPIEDIYIE.

2 disordered regions span residues 1–71 and 213–254; these read MADS…DHEP and EDSS…PVSQ. The segment covering 231-249 has biased composition (polar residues); it reads GHSTAHSPNDFKSMSPQIT. In terms of domain architecture, SH3 spans 271-332; sequence MLEATHRGLH…PSAYAVDLDY (62 aa). The PID domain maps to 344 to 479; the sequence is KERYLLGYLG…FQRFYQKFIE (136 aa).

It belongs to the JIP scaffold family. As to quaternary structure, forms homo- and heterooligomeric complexes. Binds Hep, a dual specificity protein kinase in the JNK pathway, but not its downstream target bsk. The C-terminal region interacts with the kinesin light chain protein, Klc, and the C-terminal PTY motif of amyloid-beta protein precursor-like protein, Appl. In terms of tissue distribution, expressed in the brain, CNS, PNS and cells posterior to the morphogenetic furrow in the eye imaginal disk of late embryos.

It localises to the cytoplasm. Functionally, the JNK-interacting protein (JIP) group of scaffold proteins selectively mediates JNK signaling by aggregating specific components of the MAPK cascade to form a functional JNK signaling module. May function as a regulator of vesicle transport, through interactions with the JNK-signaling components and motor proteins. In Drosophila melanogaster (Fruit fly), this protein is JNK-interacting protein 1 (Aplip1).